A 736-amino-acid polypeptide reads, in one-letter code: Meiotic expression up-regulated protein 27 (736 aa).

This sequence belongs to the UPF0300 family.

This is Meiotic expression up-regulated protein 27 (meu27) from Schizosaccharomyces pombe (strain 972 / ATCC 24843) (Fission yeast).